The primary structure comprises 78 residues: Acyl carrier protein (78 aa).

Positions 2 to 77 (SDSAEKVKKI…DAIDYIEANK (76 aa)) constitute a Carrier domain. Ser-37 bears the O-(pantetheine 4'-phosphoryl)serine mark.

This sequence belongs to the acyl carrier protein (ACP) family. Post-translationally, 4'-phosphopantetheine is transferred from CoA to a specific serine of apo-ACP by AcpS. This modification is essential for activity because fatty acids are bound in thioester linkage to the sulfhydryl of the prosthetic group.

It localises to the cytoplasm. Its pathway is lipid metabolism; fatty acid biosynthesis. Functionally, carrier of the growing fatty acid chain in fatty acid biosynthesis. The sequence is that of Acyl carrier protein from Sphingopyxis alaskensis (strain DSM 13593 / LMG 18877 / RB2256) (Sphingomonas alaskensis).